The sequence spans 379 residues: Queuine tRNA-ribosyltransferase (379 aa).

Asp94 (proton acceptor) is an active-site residue. Substrate-binding positions include 94 to 98, Asp148, Gln191, and Gly218; that span reads DSGGF. Positions 249-255 are RNA binding; sequence GVGSPDA. Asp268 (nucleophile) is an active-site residue. An RNA binding; important for wobble base 34 recognition region spans residues 273 to 277; that stretch reads TRIAR. Residues Cys306, Cys308, Cys311, and His337 each contribute to the Zn(2+) site.

The protein belongs to the queuine tRNA-ribosyltransferase family. In terms of assembly, homodimer. Within each dimer, one monomer is responsible for RNA recognition and catalysis, while the other monomer binds to the replacement base PreQ1. The cofactor is Zn(2+).

It carries out the reaction 7-aminomethyl-7-carbaguanine + guanosine(34) in tRNA = 7-aminomethyl-7-carbaguanosine(34) in tRNA + guanine. It functions in the pathway tRNA modification; tRNA-queuosine biosynthesis. Its function is as follows. Catalyzes the base-exchange of a guanine (G) residue with the queuine precursor 7-aminomethyl-7-deazaguanine (PreQ1) at position 34 (anticodon wobble position) in tRNAs with GU(N) anticodons (tRNA-Asp, -Asn, -His and -Tyr). Catalysis occurs through a double-displacement mechanism. The nucleophile active site attacks the C1' of nucleotide 34 to detach the guanine base from the RNA, forming a covalent enzyme-RNA intermediate. The proton acceptor active site deprotonates the incoming PreQ1, allowing a nucleophilic attack on the C1' of the ribose to form the product. After dissociation, two additional enzymatic reactions on the tRNA convert PreQ1 to queuine (Q), resulting in the hypermodified nucleoside queuosine (7-(((4,5-cis-dihydroxy-2-cyclopenten-1-yl)amino)methyl)-7-deazaguanosine). The polypeptide is Queuine tRNA-ribosyltransferase (Oceanobacillus iheyensis (strain DSM 14371 / CIP 107618 / JCM 11309 / KCTC 3954 / HTE831)).